The following is a 378-amino-acid chain: UDP-N-acetylglucosamine 2-epimerase (378 aa).

His-214 is a catalytic residue.

Belongs to the UDP-N-acetylglucosamine 2-epimerase family.

It carries out the reaction UDP-N-acetyl-alpha-D-glucosamine = UDP-N-acetyl-alpha-D-mannosamine. Its pathway is bacterial outer membrane biogenesis; LPS O-antigen biosynthesis. In Salmonella borreze, this protein is UDP-N-acetylglucosamine 2-epimerase (rfbC).